The following is a 111-amino-acid chain: Ig kappa chain V-III region PC 7769 (111 aa).

Residues 1 to 23 (DIVLTQSPASLAVSLGQRATISC) are framework-1. C23 and C92 form a disulfide bridge. Residues 24–38 (KASQSVDYDGDSYMN) form a complementarity-determining-1 region. The segment at 39 to 53 (WYQQKPGQPPKVLIF) is framework-2. The interval 54 to 60 (AASNLES) is complementarity-determining-2. Residues 61 to 92 (GIPARFSGSGSGTDFTLNIHPVEEEDAATYYC) are framework-3. Residues 93 to 101 (QQSNEDPWT) form a complementarity-determining-3 region. Residues 102 to 111 (FGSGTKLEIK) form a framework-4 region.

In Mus musculus (Mouse), this protein is Ig kappa chain V-III region PC 7769.